A 306-amino-acid polypeptide reads, in one-letter code: tRNA dimethylallyltransferase (306 aa).

9–16 (GPTAIGKT) provides a ligand contact to ATP. A substrate-binding site is contributed by 11-16 (TAIGKT). Residues 34 to 37 (DSMQ) form an interaction with substrate tRNA region.

The protein belongs to the IPP transferase family. Monomer. Mg(2+) is required as a cofactor.

It catalyses the reaction adenosine(37) in tRNA + dimethylallyl diphosphate = N(6)-dimethylallyladenosine(37) in tRNA + diphosphate. Functionally, catalyzes the transfer of a dimethylallyl group onto the adenine at position 37 in tRNAs that read codons beginning with uridine, leading to the formation of N6-(dimethylallyl)adenosine (i(6)A). The chain is tRNA dimethylallyltransferase from Lactobacillus helveticus (strain DPC 4571).